Reading from the N-terminus, the 371-residue chain is Ligninase LG2 (371 aa).

The first 21 residues, 1 to 21, serve as a signal peptide directing secretion; that stretch reads MAFKQLFAAITVALSLTAANA. A propeptide spanning residues 22–28 is cleaved from the precursor; sequence AVVKEKR. 4 cysteine pairs are disulfide-bonded: Cys31/Cys43, Cys42/Cys313, Cys62/Cys148, and Cys277/Cys345. Catalysis depends on His75, which acts as the Proton acceptor. Ca(2+) contacts are provided by Asp76, Gly94, Asp96, and Ser98. A 3-hydroxytryptophan modification is found at Trp199. A heme b-binding site is contributed by His204. Positions 205, 222, 224, 227, and 229 each coordinate Ca(2+). Asn285 carries N-linked (GlcNAc...) asparagine glycosylation.

The protein belongs to the peroxidase family. Ligninase subfamily. Requires Ca(2+) as cofactor. Heme b is required as a cofactor.

It catalyses the reaction 1-(3,4-dimethoxyphenyl)-2-(2-methoxyphenoxy)propane-1,3-diol + H2O2 = 3,4-dimethoxybenzaldehyde + guaiacol + glycolaldehyde + H2O. The enzyme catalyses 2 (3,4-dimethoxyphenyl)methanol + H2O2 = 2 (3,4-dimethoxyphenyl)methanol radical + 2 H2O. The protein operates within secondary metabolite metabolism; lignin degradation. Its function is as follows. Depolymerization of lignin. Catalyzes the C(alpha)-C(beta) cleavage of the propyl side chains of lignin. The protein is Ligninase LG2 (GLG2) of Phanerodontia chrysosporium (White-rot fungus).